The chain runs to 174 residues: Small ribosomal subunit protein bS16 (174 aa).

The tract at residues 81-174 (QRFTGEPAPP…DATTDATPSA (94 aa)) is disordered. Residues 87–97 (PAPPPMKTAPP) show a composition bias toward pro residues. Positions 98-118 (KPDKKALFEAAAKEAAGEPRA) are enriched in basic and acidic residues. Over residues 135 to 158 (ETTPAAEAAPDAAASADEPAGGAS) the composition is skewed to low complexity. Residues 160 to 174 (AAESQDATTDATPSA) show a composition bias toward polar residues.

It belongs to the bacterial ribosomal protein bS16 family.

The chain is Small ribosomal subunit protein bS16 from Acidothermus cellulolyticus (strain ATCC 43068 / DSM 8971 / 11B).